A 448-amino-acid chain; its full sequence is tRNA methyltransferase 10 homolog C (448 aa).

The N-terminal 48 residues, 1–48 (MAFVNTLLRTIRCSAVHTLVQEGRSLSLLKASHQLTQSRKIMLSNHVR), are a transit peptide targeting the mitochondrion. Positions 137 to 165 (REVMKTNRKEKKKELKESKSKIESLDQLE) form a coiled coil. The tract at residues 144–167 (RKEKKKELKESKSKIESLDQLETK) is disordered. The 193-residue stretch at 190-382 (QRWKCVQAMK…SFVPNRKHDG (193 aa)) folds into the SAM-dependent MTase TRM10-type domain. The disordered stretch occupies residues 429–448 (ERTDDTSIRSTRKRWWEEEN).

This sequence belongs to the class IV-like SAM-binding methyltransferase superfamily. TRM10 family. As to quaternary structure, component of mitochondrial ribonuclease P. Interacts with HSD17B10/MRPP2.

It localises to the mitochondrion matrix. The protein resides in the mitochondrion nucleoid. The catalysed reaction is adenosine(9) in tRNA + S-adenosyl-L-methionine = N(1)-methyladenosine(9) in tRNA + S-adenosyl-L-homocysteine + H(+). It catalyses the reaction guanosine(9) in tRNA + S-adenosyl-L-methionine = N(1)-methylguanosine(9) in tRNA + S-adenosyl-L-homocysteine + H(+). It carries out the reaction an adenosine in mRNA + S-adenosyl-L-methionine = an N(1)-methyladenosine in mRNA + S-adenosyl-L-homocysteine + H(+). Mitochondrial tRNA N(1)-methyltransferase involved in mitochondrial tRNA maturation. Component of mitochondrial ribonuclease P, which cleaves tRNA molecules in their 5'-ends. Together with hsd17b10/mrpp2, forms a subcomplex of the mitochondrial ribonuclease P, named MRPP1-MRPP2 subcomplex, which displays functions that are independent of the ribonuclease P activity. The MRPP1-MRPP2 subcomplex catalyzes the formation of N(1)-methylguanine and N(1)-methyladenine at position 9 (m1G9 and m1A9, respectively) in tRNAs; trmt10c/mrpp1 acting as the catalytic N(1)-methyltransferase subunit. The MRPP1-MRPP2 subcomplex also acts as a tRNA maturation platform: following 5'-end cleavage by the mitochondrial ribonuclease P complex, the MRPP1-MRPP2 subcomplex enhances the efficiency of 3'-processing catalyzed by ELAC2, retains the tRNA product after elac2 processing and presents the nascent tRNA to the mitochondrial CCA tRNA nucleotidyltransferase TRNT1 enzyme. In addition to tRNA N(1)-methyltransferase activity, trmt10c/mrpp1 also acts as a mRNA N(1)-methyltransferase by mediating methylation of adenosine residues at the N(1) position of MT-ND5 mRNA. The protein is tRNA methyltransferase 10 homolog C of Xenopus tropicalis (Western clawed frog).